The chain runs to 164 residues: Ribosome maturation factor RimM (164 aa).

The PRC barrel domain occupies 90-161 (KGSYFIADLI…TVTIKPLEIW (72 aa)).

The protein belongs to the RimM family. As to quaternary structure, binds ribosomal protein uS19.

Its subcellular location is the cytoplasm. In terms of biological role, an accessory protein needed during the final step in the assembly of 30S ribosomal subunit, possibly for assembly of the head region. Essential for efficient processing of 16S rRNA. May be needed both before and after RbfA during the maturation of 16S rRNA. It has affinity for free ribosomal 30S subunits but not for 70S ribosomes. The protein is Ribosome maturation factor RimM of Clostridium botulinum (strain ATCC 19397 / Type A).